The chain runs to 204 residues: ADP-ribosylation factor-like protein 15 (204 aa).

Residues 39–46 (GLTGSGKT), 82–86 (ELGGA), and 142–145 (NHQD) contribute to the GTP site.

This sequence belongs to the small GTPase superfamily. Arf family.

The chain is ADP-ribosylation factor-like protein 15 (ARL15) from Pongo abelii (Sumatran orangutan).